A 54-amino-acid polypeptide reads, in one-letter code: MSFHLWMANLDAYMQETFGVGRRDIADWTYHDAYDDGLTFREAAHQAIANELGS.

This chain is Gene 87 protein (87), found in Mycobacterium (Mycobacteriophage D29).